Consider the following 162-residue polypeptide: SCF ubiquitin ligase complex protein SKP1b (162 aa).

Ser2 is modified (N-acetylserine). Residues Ile100 to Asn162 form an interaction with the F-box domain of F-box proteins region. Position 143 is a 4-hydroxyproline (Pro143). Pro143 is a glycosylation site (O-linked (GlcNAc...) hydroxyproline).

This sequence belongs to the SKP1 family. Multiprotein complex (SCF) with cullin and F-box-containing protein. Capable of undergoing aggregation. In terms of processing, O-linked glycan consists of linear Gal-Gal-Fuc-Gal-GlcNAc. Not glycosylated in prespore cells. Post-translationally, fpaA and fpaB seem to be identically glycosylated. Glycosylation is required for nuclear enrichment. In terms of processing, hydroxylated by phyA.

The protein resides in the cytoplasm. It localises to the nucleus. The chain is SCF ubiquitin ligase complex protein SKP1b (fpaB-1) from Dictyostelium discoideum (Social amoeba).